The sequence spans 122 residues: Small ribosomal subunit protein bS6 (122 aa).

Residues 96-122 are disordered; that stretch reads ETAPSPMMKAVQKEDAAKSHRTEAPAA. Over residues 106–122 the composition is skewed to basic and acidic residues; sequence VQKEDAAKSHRTEAPAA.

This sequence belongs to the bacterial ribosomal protein bS6 family.

Functionally, binds together with bS18 to 16S ribosomal RNA. This is Small ribosomal subunit protein bS6 from Herminiimonas arsenicoxydans.